Reading from the N-terminus, the 63-residue chain is uncharacterized protein (63 aa).

Residues 1-15 (MGRNHIHKNRDKNKQ) show a composition bias toward basic residues. Positions 1 to 63 (MGRNHIHKNR…ADNRAKKKSR (63 aa)) are disordered. Residues 30-44 (GVYEEYSTELADADD) show a composition bias toward acidic residues. A compositionally biased stretch (basic and acidic residues) spans 45–57 (REAQERAKAADNR).

This is an uncharacterized protein from Bacillus subtilis (strain 168).